The sequence spans 719 residues: Ribosomal RNA large subunit methyltransferase K/L (719 aa).

One can recognise a THUMP domain in the interval 43 to 154 (TQYRVLLWTR…REELVISLDL (112 aa)).

Belongs to the methyltransferase superfamily. RlmKL family.

It localises to the cytoplasm. The enzyme catalyses guanosine(2445) in 23S rRNA + S-adenosyl-L-methionine = N(2)-methylguanosine(2445) in 23S rRNA + S-adenosyl-L-homocysteine + H(+). It carries out the reaction guanosine(2069) in 23S rRNA + S-adenosyl-L-methionine = N(2)-methylguanosine(2069) in 23S rRNA + S-adenosyl-L-homocysteine + H(+). In terms of biological role, specifically methylates the guanine in position 2445 (m2G2445) and the guanine in position 2069 (m7G2069) of 23S rRNA. This is Ribosomal RNA large subunit methyltransferase K/L from Pasteurella multocida (strain Pm70).